A 471-amino-acid chain; its full sequence is Kynurenine 3-monooxygenase (471 aa).

FAD-binding positions include V19, 37-40 (YESR), and A57. L-kynurenine is bound by residues R85 and Y99. FAD is bound by residues R111, L136, T172, D304, and 317 to 318 (MN). Residues N363 and Y398 each coordinate L-kynurenine. The next 2 helical transmembrane spans lie at 385–404 (CLHT…VTFS) and 425–445 (ALFF…TGPT).

Belongs to the aromatic-ring hydroxylase family. KMO subfamily. It depends on FAD as a cofactor.

It is found in the mitochondrion outer membrane. The catalysed reaction is L-kynurenine + NADPH + O2 + H(+) = 3-hydroxy-L-kynurenine + NADP(+) + H2O. It functions in the pathway cofactor biosynthesis; NAD(+) biosynthesis; quinolinate from L-kynurenine: step 1/3. Functionally, catalyzes the hydroxylation of L-kynurenine (L-Kyn) to form 3-hydroxy-L-kynurenine (L-3OHKyn). Required for synthesis of quinolinic acid, a neurotoxic NMDA receptor antagonist and potential endogenous inhibitor of NMDA receptor signaling in axonal targeting, synaptogenesis and apoptosis during brain development. Quinolinic acid may also affect NMDA receptor signaling in pancreatic beta cells, osteoblasts, myocardial cells, and the gastrointestinal tract. This chain is Kynurenine 3-monooxygenase, found in Sus scrofa (Pig).